The primary structure comprises 442 residues: MTRRPVSRKRRATHGTGPGEQSDWDHSAHKRKRLQPEKKSLVFYLKSRELKPHNDSTYLHLLRGHAACTLPGILSEREFHLGNLNKVFASQWLNHRQVVCGTKCNTLFVVDIQTGQITKIPILKDREPISGSHQSCGIHAIEINPSRTLLATGGENPNSIAVYRLPTLDPVCVGDGGHNDWIFSIAWISDTMAVSGSRDGFMALWEMTDEVVNKRDFQHGLSRVPVYSHISHKALKDIPKESSNPVNCKVRALAFNGNNKELGAVSLDGFFHLWKAEQTLSKLLSTKLPFCRENVCLAYGLEWSLYAVGSQAHVSFLDPREPPQCAKSVYCREQGSGIRSVSFYEHIVTVGTGQGALLFYDIRAQRFLEDLTGSCREGDLLKLNTGKGWLNHNEMWMNYFSDIDSCPNAVYTHCYDSSGTKLFVAGGPLPTGLHGNYAGLWS.

Basic residues predominate over residues 1–13 (MTRRPVSRKRRAT). Positions 1 to 31 (MTRRPVSRKRRATHGTGPGEQSDWDHSAHKR) are disordered. WD repeat units lie at residues 132–173 (SHQS…PVCV), 177–215 (GHND…VNKR), 245–284 (PVNC…SKLL), and 333–370 (EQGS…FLED).

It belongs to the WD repeat DCAF12 family. Component of the DCX(DCAF12) E3 ubiquitin ligase complex, at least composed of cul4 (cul4a or cul4b), ddb1, dcaf12 and rbx1.

Its subcellular location is the cytoplasm. The protein resides in the cytoskeleton. It is found in the microtubule organizing center. The protein localises to the centrosome. It localises to the nucleus. The protein operates within protein modification; protein ubiquitination. Substrate-recognition component of a DCX (DDB1-CUL4-X-box) E3 ubiquitin-protein ligase complex of the DesCEND (destruction via C-end degrons) pathway, which recognizes a C-degron located at the extreme C terminus of target proteins, leading to their ubiquitination and degradation. The C-degron recognized by the DesCEND pathway is usually a motif of less than ten residues and can be present in full-length proteins, truncated proteins or proteolytically cleaved forms. The DCX(DCAF12) complex specifically recognizes proteins with a diglutamate (Glu-Glu) at the C-terminus leading to their ubiquitination and degradation. Also directly recognizes the C-terminal glutamate-leucine (Glu-Leu) degron as an alternative degron in proteins leading to their ubiquitination and degradation. This Xenopus laevis (African clawed frog) protein is DDB1- and CUL4-associated factor 12-B (dcaf12-b).